The sequence spans 236 residues: uncharacterized protein (236 aa).

This sequence belongs to the HyuE racemase family.

It is found in the cytoplasm. This is an uncharacterized protein from Schizosaccharomyces pombe (strain 972 / ATCC 24843) (Fission yeast).